A 464-amino-acid polypeptide reads, in one-letter code: L-2-hydroxyglutarate dehydrogenase, mitochondrial (464 aa).

The transit peptide at 1-52 (MWPTLRYVGGVCGLARYCVAGGFLRASGPASGVPGLLCGGGRRSSSTSSFDI) directs the protein to the mitochondrion. N6-acetyllysine occurs at positions 105 and 174.

Belongs to the L2HGDH family. FAD serves as cofactor.

It is found in the mitochondrion. It carries out the reaction (S)-2-hydroxyglutarate + A = 2-oxoglutarate + AH2. The sequence is that of L-2-hydroxyglutarate dehydrogenase, mitochondrial (L2hgdh) from Mus musculus (Mouse).